Consider the following 998-residue polypeptide: Calcium-transporting ATPase 3, endoplasmic reticulum-type (998 aa).

At 1-48 (MEDAYARSVSEVLDFFGVDPTKGLSDSQVVHHSRLYGRNVLPEEKRTP) the chain is on the cytoplasmic side. A helical transmembrane segment spans residues 49 to 69 (FWKLVLKQFDDLLVKILIVAA). The Lumenal segment spans residues 70-89 (IVSFVLALANGETGLTAFLE). Residues 90–109 (PFVILLILAANAAVGVITET) traverse the membrane as a helical segment. Topologically, residues 110 to 250 (NAEKALEELR…DEATPLKKKL (141 aa)) are cytoplasmic. Residues 251–270 (DEFGSFLAKVIAGICVLVWV) form a helical membrane-spanning segment. The Lumenal segment spans residues 271-291 (VNIGHFSDPSHGGFFKGAIHY). The chain crosses the membrane as a helical span at residues 292–309 (FKIAVALAVAAIPEGLPA). Ca(2+) is bound by residues V300, A301, I303, and E305. Residues 310–746 (VVTTCLALGT…AEGRAIYNNT (437 aa)) are Cytoplasmic-facing. D347 acts as the 4-aspartylphosphate intermediate in catalysis. The Mg(2+) site is built by D692 and D696. The helical transmembrane segment at 747–766 (KQFIRYMISSNIGEVVCIFV) threads the bilayer. The Ca(2+) site is built by N757 and E760. Over 767–776 (AAVLGIPDTL) the chain is Lumenal. Residues 777–797 (APVQLLWVNLVTDGLPATAIG) form a helical membrane-spanning segment. Residues N785, T788, and D789 each coordinate Ca(2+). Topologically, residues 798-817 (FNKQDSDVMKAKPRKVGEAV) are cytoplasmic. A helical transmembrane segment spans residues 818 to 840 (VTGWLFFRYLVIGVYVGLATVAG). The Lumenal segment spans residues 841–883 (FIWWFVYSDGGPKLTYSELMNFETCALRETTYPCSIFEDRHPS). The helical transmembrane segment at 884–903 (TVAMTVLVVVEMFNALNNLS) threads the bilayer. E894 contributes to the Ca(2+) binding site. Residues 904–916 (ENQSLLVITPRSN) lie on the Cytoplasmic side of the membrane. A helical transmembrane segment spans residues 917-935 (LWLVGSIILTMLLHVLILY). At 936–950 (VHPLAVLFSVTPLSW) the chain is on the lumenal side. A helical transmembrane segment spans residues 951 to 971 (AEWTAVLYLSFPVIIIDELLK). Over 972-998 (FLSRNTGMRFRFRLRKADLLPKDRRDK) the chain is Cytoplasmic.

Belongs to the cation transport ATPase (P-type) (TC 3.A.3) family. Type IIA subfamily. In terms of tissue distribution, expressed in root cap, in elongation and differentiation zones of roots, in vascular tissues of roots, leaves, floral pedicels and style, in leaves, including hydathodes and guard cells, in stamens, in petals, in sepals and in siliques.

It localises to the golgi apparatus membrane. The protein resides in the endosome membrane. The protein localises to the prevacuolar compartment membrane. It carries out the reaction Ca(2+)(in) + ATP + H2O = Ca(2+)(out) + ADP + phosphate + H(+). Its function is as follows. This magnesium-dependent enzyme catalyzes the hydrolysis of ATP coupled with the translocation of calcium from the cytosol to an endomembrane compartment. Involved in calcium-enhanced root growth, in tolerance to toxic levels of manganese and in secretory processes. Has a crucial role in manganese nutrition, but is not involved in transporting copper, iron or zinc. This chain is Calcium-transporting ATPase 3, endoplasmic reticulum-type, found in Arabidopsis thaliana (Mouse-ear cress).